The chain runs to 847 residues: Glucans biosynthesis glucosyltransferase H (847 aa).

Topologically, residues 1 to 138 (MNKTTEYIDA…KWRTVGTIRR (138 aa)) are cytoplasmic. Residues 139-156 (YILLILTLAQTVVATWYM) traverse the membrane as a helical segment. The Periplasmic segment spans residues 157 to 193 (KTILPYQGWALINPMDMVGQDVWVSFMQLLPYMLQTG). Residues 194–216 (ILILFAVLFCWVSAGFWTALMGF) form a helical membrane-spanning segment. Topologically, residues 217–511 (LQLLIGRDKY…LVKGMHPVHR (295 aa)) are cytoplasmic. The chain crosses the membrane as a helical span at residues 512–534 (AVFLTGVMSYLSAPLWFMFLALS). Topologically, residues 535–567 (TALQVVHALTEPQYFLQPRQLFPVWPQWRPELA) are periplasmic. Residues 568–590 (IALFASTMVLLFLPKLLSILLIW) traverse the membrane as a helical segment. Over 591 to 602 (CKGTKEYGGFWR) the chain is Cytoplasmic. A helical membrane pass occupies residues 603–625 (VTLSLLLEVLFSVLLAPVRMLFH). Topologically, residues 626–679 (TVFVVSAFLGWEVVWNSPQRDDDSTSWGEAFKRHGSQLLLGLVWAVGMAWLDLR) are periplasmic. A helical transmembrane segment spans residues 680 to 702 (FLFWLAPIVFSLILSPFVSVISS). Over 703-847 (RATVGLRTKR…ALRKPDAASQ (145 aa)) the chain is Cytoplasmic.

The protein belongs to the glycosyltransferase 2 family. OpgH subfamily.

It is found in the cell inner membrane. The protein operates within glycan metabolism; osmoregulated periplasmic glucan (OPG) biosynthesis. In terms of biological role, involved in the biosynthesis of osmoregulated periplasmic glucans (OPGs). The polypeptide is Glucans biosynthesis glucosyltransferase H (Escherichia coli O6:H1 (strain CFT073 / ATCC 700928 / UPEC)).